Here is a 478-residue protein sequence, read N- to C-terminus: Crt homolog 3 (478 aa).

The segment at 1–30 is disordered; sequence MGSDERKPLLSINDGDDDFNHQDVSTKTPP. The Cytoplasmic segment spans residues 1 to 52; it reads MGSDERKPLLSINDGDDDFNHQDVSTKTPPIKKESLSNKFKSFLKKSMTKET. Residues 53-73 form a helical membrane-spanning segment; it reads LPILIYVLLYIISGVINVVLL. At 74–83 the chain is on the vacuolar side; that stretch reads KKLMIKFVNY. A helical transmembrane segment spans residues 84-104; sequence GFFLSQITNYGYLPIFLVAMW. At 105–124 the chain is on the cytoplasmic side; the sequence is YKMYCTSDVPKETRNFPQYK. Residues 125–145 form a helical membrane-spanning segment; sequence FVIMGLLDAINGFFVVIGGVS. The Vacuolar portion of the chain corresponds to 146–149; it reads TSGP. A helical membrane pass occupies residues 150 to 170; sequence LQQLLNQAIIPFTMIASFIFL. The Cytoplasmic segment spans residues 171–178; sequence RERYSLFQ. A helical membrane pass occupies residues 179–199; the sequence is LGGAAVILGGVIVSLIPSLVG. Residues 200–205 are Vacuolar-facing; the sequence is GSSGGN. Residues 206 to 226 traverse the membrane as a helical segment; the sequence is ILFYNFFYLISVIPGALSNVY. Residues 227–237 lie on the Cytoplasmic side of the membrane; that stretch reads KDIAFQSIDMD. A helical transmembrane segment spans residues 238 to 258; sequence VWYLQFWDCLYQSLFGSILFP. At 259-322 the chain is on the vacuolar side; that stretch reads VNNWLPPPAT…FVCDDCHNTW (64 aa). Asn296 carries an N-linked (GlcNAc...) asparagine glycan. The chain crosses the membrane as a helical span at residues 323 to 343; it reads IIVLIYMTVNIAYNIFILLVL. Residues 344–352 are Cytoplasmic-facing; sequence KHAGATVYS. Residues 353–373 traverse the membrane as a helical segment; that stretch reads IANTVILPLTNIFFSIHFIMG. The Vacuolar segment spans residues 374–376; that stretch reads AAT. The chain crosses the membrane as a helical span at residues 377 to 397; sequence TPFSALSVAGLLLILFGLGGY. The Cytoplasmic segment spans residues 398-478; the sequence is RIGSMIKKPP…RYRATNIINN (81 aa). The disordered stretch occupies residues 404–446; the sequence is KKPPPDSKKDSEQQGGEGGAGDGDSSDNKNNLGDSAEIPQQIQ. Over residues 406–415 the composition is skewed to basic and acidic residues; that stretch reads PPPDSKKDSE.

This sequence belongs to the CRT-like transporter family.

Its subcellular location is the vacuole membrane. Nutrient transporter. Involved in maintaining the osmotic homeostasis of the digestive vacuole. The sequence is that of Crt homolog 3 (crtp3) from Dictyostelium discoideum (Social amoeba).